A 607-amino-acid polypeptide reads, in one-letter code: T-box transcription factor TBX18 (607 aa).

An Engrailed homology 1 repressor motif is present at residues 18–28 (HAFSVEALIGA). The disordered stretch occupies residues 30 to 141 (KQQQLQKKRR…PLPSPQAPRV (112 aa)). Residues 36 to 40 (KKRRK) carry the Nuclear localization signal motif. Low complexity predominate over residues 44-53 (EEAAGAVDDG). The T-box DNA-binding region spans 143–330 (LQGAELWKRF…RNPFAKGFRD (188 aa)).

Homodimer. Can form a heterodimer with TBX15. Interacts with GATA4 and NKX2-5. Interacts with PAX3. Interacts (via engrailed homology 1 repressor motif) with TLE3; this interaction represses TBX18 transcriptional activity. Interacts with SIX1.

Its subcellular location is the nucleus. Its function is as follows. Acts as a transcriptional repressor involved in developmental processes of a variety of tissues and organs, including the heart and coronary vessels, the ureter and the vertebral column. Required for embryonic development of the sino atrial node (SAN) head area. The polypeptide is T-box transcription factor TBX18 (TBX18) (Homo sapiens (Human)).